A 257-amino-acid chain; its full sequence is Hydroxyacylglutathione hydrolase (257 aa).

7 residues coordinate Zn(2+): H54, H56, D58, H59, H113, D137, and H175.

Belongs to the metallo-beta-lactamase superfamily. Glyoxalase II family. Monomer. Requires Zn(2+) as cofactor.

It carries out the reaction an S-(2-hydroxyacyl)glutathione + H2O = a 2-hydroxy carboxylate + glutathione + H(+). The protein operates within secondary metabolite metabolism; methylglyoxal degradation; (R)-lactate from methylglyoxal: step 2/2. Functionally, thiolesterase that catalyzes the hydrolysis of S-D-lactoyl-glutathione to form glutathione and D-lactic acid. The chain is Hydroxyacylglutathione hydrolase from Gloeothece citriformis (strain PCC 7424) (Cyanothece sp. (strain PCC 7424)).